A 163-amino-acid polypeptide reads, in one-letter code: 2-C-methyl-D-erythritol 2,4-cyclodiphosphate synthase (163 aa).

The a divalent metal cation site is built by Asp-11 and His-13. Residues 11-13 (DIH) and 37-38 (HS) each bind 4-CDP-2-C-methyl-D-erythritol 2-phosphate. His-45 is an a divalent metal cation binding site. Residues 59-61 (DIG), 64-68 (FSDTD), 103-109 (AQVPKMA), and Arg-145 contribute to the 4-CDP-2-C-methyl-D-erythritol 2-phosphate site.

It belongs to the IspF family. As to quaternary structure, homotrimer. A divalent metal cation is required as a cofactor.

It carries out the reaction 4-CDP-2-C-methyl-D-erythritol 2-phosphate = 2-C-methyl-D-erythritol 2,4-cyclic diphosphate + CMP. The protein operates within isoprenoid biosynthesis; isopentenyl diphosphate biosynthesis via DXP pathway; isopentenyl diphosphate from 1-deoxy-D-xylulose 5-phosphate: step 4/6. In terms of biological role, involved in the biosynthesis of isopentenyl diphosphate (IPP) and dimethylallyl diphosphate (DMAPP), two major building blocks of isoprenoid compounds. Catalyzes the conversion of 4-diphosphocytidyl-2-C-methyl-D-erythritol 2-phosphate (CDP-ME2P) to 2-C-methyl-D-erythritol 2,4-cyclodiphosphate (ME-CPP) with a corresponding release of cytidine 5-monophosphate (CMP). The sequence is that of 2-C-methyl-D-erythritol 2,4-cyclodiphosphate synthase from Nitrosomonas europaea (strain ATCC 19718 / CIP 103999 / KCTC 2705 / NBRC 14298).